A 51-amino-acid polypeptide reads, in one-letter code: Large ribosomal subunit protein bL33 (51 aa).

This sequence belongs to the bacterial ribosomal protein bL33 family.

The polypeptide is Large ribosomal subunit protein bL33 (Marinobacter nauticus (strain ATCC 700491 / DSM 11845 / VT8) (Marinobacter aquaeolei)).